Reading from the N-terminus, the 89-residue chain is Small ribosomal subunit protein uS15 (89 aa).

The span at 1 to 11 shows a compositional bias: basic and acidic residues; that stretch reads MSITAERKAEV. The tract at residues 1–25 is disordered; sequence MSITAERKAEVIKTNARKSGDTGSP.

The protein belongs to the universal ribosomal protein uS15 family. In terms of assembly, part of the 30S ribosomal subunit. Forms a bridge to the 50S subunit in the 70S ribosome, contacting the 23S rRNA.

One of the primary rRNA binding proteins, it binds directly to 16S rRNA where it helps nucleate assembly of the platform of the 30S subunit by binding and bridging several RNA helices of the 16S rRNA. Functionally, forms an intersubunit bridge (bridge B4) with the 23S rRNA of the 50S subunit in the ribosome. This Nitrobacter hamburgensis (strain DSM 10229 / NCIMB 13809 / X14) protein is Small ribosomal subunit protein uS15.